Consider the following 231-residue polypeptide: Uracil phosphoribosyltransferase (231 aa).

38 to 42 (KGLVR) is a GTP binding site. 5-phospho-alpha-D-ribose 1-diphosphate contacts are provided by residues Arg-87, Arg-112, and 140-148 (DPMIATGST). Uracil contacts are provided by residues Ile-203 and 208–210 (GDA). Asp-209 is a 5-phospho-alpha-D-ribose 1-diphosphate binding site.

Belongs to the UPRTase family. The cofactor is Mg(2+).

It carries out the reaction UMP + diphosphate = 5-phospho-alpha-D-ribose 1-diphosphate + uracil. Its pathway is pyrimidine metabolism; UMP biosynthesis via salvage pathway; UMP from uracil: step 1/1. Its activity is regulated as follows. Allosterically activated by GTP. In terms of biological role, catalyzes the conversion of uracil and 5-phospho-alpha-D-ribose 1-diphosphate (PRPP) to UMP and diphosphate. The sequence is that of Uracil phosphoribosyltransferase from Methanococcus maripaludis (strain C7 / ATCC BAA-1331).